The sequence spans 245 residues: 1-(5-phosphoribosyl)-5-[(5-phosphoribosylamino)methylideneamino] imidazole-4-carboxamide isomerase (245 aa).

Aspartate 8 acts as the Proton acceptor in catalysis. The active-site Proton donor is the aspartate 129.

Belongs to the HisA/HisF family.

It localises to the cytoplasm. The enzyme catalyses 1-(5-phospho-beta-D-ribosyl)-5-[(5-phospho-beta-D-ribosylamino)methylideneamino]imidazole-4-carboxamide = 5-[(5-phospho-1-deoxy-D-ribulos-1-ylimino)methylamino]-1-(5-phospho-beta-D-ribosyl)imidazole-4-carboxamide. Its pathway is amino-acid biosynthesis; L-histidine biosynthesis; L-histidine from 5-phospho-alpha-D-ribose 1-diphosphate: step 4/9. This is 1-(5-phosphoribosyl)-5-[(5-phosphoribosylamino)methylideneamino] imidazole-4-carboxamide isomerase from Rhodopseudomonas palustris (strain ATCC BAA-98 / CGA009).